We begin with the raw amino-acid sequence, 181 residues long: Large ribosomal subunit protein uL5 (181 aa).

Belongs to the universal ribosomal protein uL5 family. Part of the 50S ribosomal subunit; part of the 5S rRNA/L5/L18/L25 subcomplex. Contacts the 5S rRNA and the P site tRNA. Forms a bridge to the 30S subunit in the 70S ribosome.

Its function is as follows. This is one of the proteins that bind and probably mediate the attachment of the 5S RNA into the large ribosomal subunit, where it forms part of the central protuberance. In the 70S ribosome it contacts protein S13 of the 30S subunit (bridge B1b), connecting the 2 subunits; this bridge is implicated in subunit movement. Contacts the P site tRNA; the 5S rRNA and some of its associated proteins might help stabilize positioning of ribosome-bound tRNAs. The polypeptide is Large ribosomal subunit protein uL5 (Mesomycoplasma hyopneumoniae (strain 7448) (Mycoplasma hyopneumoniae)).